Consider the following 87-residue polypeptide: MNSKVFAALLLLALSTCVLSEKYCPTPRNTSCKKMNIRNNCCRDSDCTSNAFCCAEPCGNFCHKASDKPGGRRVDPNASCQTGYVYW.

The first 20 residues, 1–20 (MNSKVFAALLLLALSTCVLS), serve as a signal peptide directing secretion. The region spanning 21-66 (EKYCPTPRNTSCKKMNIRNNCCRDSDCTSNAFCCAEPCGNFCHKAS) is the WAP domain. Intrachain disulfides connect C24–C54, C32–C58, C41–C53, C42–C80, and C47–C62.

This sequence belongs to the venom protein 11 family. 01 (wap-1) subfamily. Contains 5 disulfide bonds. As to expression, expressed by the venom gland.

The protein resides in the secreted. In terms of biological role, has antibacterial activity. This is U14-lycotoxin-Ls1a from Lycosa singoriensis (Wolf spider).